The sequence spans 428 residues: Tryptophan synthase beta chain (428 aa).

Lysine 100 carries the post-translational modification N6-(pyridoxal phosphate)lysine.

The protein belongs to the TrpB family. As to quaternary structure, tetramer of two alpha and two beta chains. It depends on pyridoxal 5'-phosphate as a cofactor.

The catalysed reaction is (1S,2R)-1-C-(indol-3-yl)glycerol 3-phosphate + L-serine = D-glyceraldehyde 3-phosphate + L-tryptophan + H2O. Its pathway is amino-acid biosynthesis; L-tryptophan biosynthesis; L-tryptophan from chorismate: step 5/5. Functionally, the beta subunit is responsible for the synthesis of L-tryptophan from indole and L-serine. The protein is Tryptophan synthase beta chain of Streptomyces avermitilis (strain ATCC 31267 / DSM 46492 / JCM 5070 / NBRC 14893 / NCIMB 12804 / NRRL 8165 / MA-4680).